The sequence spans 304 residues: GS homeobox 2 (304 aa).

Positions Ala-116–Ala-151 are disordered. Residues Asn-123–Gln-140 are compositionally biased toward basic residues. The span at Pro-141–Ala-151 shows a compositional bias: low complexity. The homeobox DNA-binding region spans Gly-202 to Gly-261. The interval Arg-283–Leu-304 is disordered.

This sequence belongs to the Antp homeobox family.

The protein resides in the nucleus. It is found in the cytoplasm. Functionally, transcription factor that binds 5'-CNAATTAG-3' DNA sequence and regulates the expression of numerous genes including genes important for brain development. During telencephalic development, causes ventralization of pallial progenitors and, depending on the developmental stage, specifies different neuronal fates. At early stages, necessary and sufficient to correctly specify the ventral lateral ganglionic eminence (LGE) and its major derivatives, the striatal projection neurons. At later stages, may specify LGE progenitors toward dorsal LGE fates, including olfactory bulb interneurons. The protein is GS homeobox 2 (GSX2) of Homo sapiens (Human).